The sequence spans 620 residues: MDKNQIIGISLISVLMLGYFGFMSTQTPETPVTTPPAITQPVQSDTVLLKSAATDTALKAQNQREYGDFAAAMVGEAKEYKLENKDVVVTLSTKGGTIKSVLLKNYFTWDKKQLFLFKQENNQLSLILNTNKKPVDLYSLYYAGVESKAGDKQVVTFKTDAGNGKTIEHTYTLGAAGFTVDYNLKAAGFGGELPNLPLTLDWREQVERIEYDSEQARVKSTVNYMAAEDGFDYLSEASKDRETETLSNVYWVSLKQKFFNSGFYIREGGTIPSATVTAYPMYSTLPNAPVNSEKFIKALEAQVQLPLEAVISGKAAYAFYFGPNDFKICKAVPAENYQKNVNLGWPLVSWINRFVVIPVFDGLKGVFSSFGLIIVILVLLIKLVLLPLSYKSFVSMAKMKALKPELDELKAKHGDDQQAIQMEQMQVYKQFGINPLSGCIPVLLQMPILLAMFNFFPNAIDLRGESLWWATDLSSYDEFAKLPFTIPFYGSHVSMFTLLMTISTLAYTWVNNQVSTVTGPMKYMSYAMPVVFLFVLNSFPAGLSFYYFVSNLVTIAQQLIIRRFVDEGQLRLQLEAKRDKNLSGDTTGGAPKKNRFMARMEEAMKQREQEQQFKKNIKKK.

6 consecutive transmembrane segments (helical) span residues 5-25 (QIIG…FMST), 343-363 (LGWP…FDGL), 366-386 (VFSS…LVLL), 436-456 (LSGC…FNFF), 482-502 (LPFT…LMTI), and 529-549 (PVVF…YYFV).

It belongs to the OXA1/ALB3/YidC family. Type 1 subfamily. Interacts with the Sec translocase complex via SecD. Specifically interacts with transmembrane segments of nascent integral membrane proteins during membrane integration.

Its subcellular location is the cell inner membrane. Its function is as follows. Required for the insertion and/or proper folding and/or complex formation of integral membrane proteins into the membrane. Involved in integration of membrane proteins that insert both dependently and independently of the Sec translocase complex, as well as at least some lipoproteins. Aids folding of multispanning membrane proteins. This is Membrane protein insertase YidC from Cytophaga hutchinsonii (strain ATCC 33406 / DSM 1761 / CIP 103989 / NBRC 15051 / NCIMB 9469 / D465).